A 142-amino-acid polypeptide reads, in one-letter code: Large ribosomal subunit protein uL11 (142 aa).

This sequence belongs to the universal ribosomal protein uL11 family. As to quaternary structure, part of the ribosomal stalk of the 50S ribosomal subunit. Interacts with L10 and the large rRNA to form the base of the stalk. L10 forms an elongated spine to which L12 dimers bind in a sequential fashion forming a multimeric L10(L12)X complex. In terms of processing, one or more lysine residues are methylated.

In terms of biological role, forms part of the ribosomal stalk which helps the ribosome interact with GTP-bound translation factors. The protein is Large ribosomal subunit protein uL11 of Vibrio campbellii (strain ATCC BAA-1116).